Reading from the N-terminus, the 329-residue chain is Calponin-3 (329 aa).

Lys-23 bears the N6-acetyllysine mark. The Calponin-homology (CH) domain occupies 26–130; sequence HQAEEDLRNW…TLVALAGLAK (105 aa). The residue at position 158 (Lys-158) is an N6-methyllysine. Calponin-like repeat units lie at residues 164-189, 204-229, and 243-268; these read IGLQ…RHLY, ISLQ…RDIY, and ISLQ…RQVY. Residues 280–329 form a disordered region; sequence VIHNGSQGTGTNGSEISDSDYQAEYPDEYHGEYQDDYPRDYQYGDQGIDY. The span at 306–318 shows a compositional bias: basic and acidic residues; sequence DEYHGEYQDDYPR.

This sequence belongs to the calponin family.

Functionally, thin filament-associated protein that is implicated in the regulation and modulation of smooth muscle contraction. It is capable of binding to actin, calmodulin and tropomyosin. The interaction of calponin with actin inhibits the actomyosin Mg-ATPase activity. The sequence is that of Calponin-3 (CNN3) from Bos taurus (Bovine).